A 341-amino-acid polypeptide reads, in one-letter code: MAPIEILKFPISSPGDISPLKKLQDAGYDPSNILAVVGKTEGNGCVNDFSRTLASAVWEPRIPSDAVTIFSGGTEGVLSPHVTFFLRSPGDKETGLSAAVGHTRRFEPHEIGTDEQAQQVATTTSSLIEQMGVTPDQVHMVLIKCPLLTSEKLETIRALGRVPVTTDTYESMARSRYASAVGIAAAVGEIQHTRIPEAVSKAGTWSAKASCSSGAELEDCHILVLASTSAQGSRLHAVSRPMADAMDAASILALMELAKKDGGKIVQVFAKAEADPSGHVREWRHTMNTDSDIHSTRHARAAVGGLIAGLVSDAEIYVSGGAEGQGPSGGGSLCLVYETSI.

The segment at 1–90 is RU A; that stretch reads MAPIEILKFP…HVTFFLRSPG (90 aa). Substrate is bound by residues Arg51 and 71–72; that span reads SG. The RU B stretch occupies residues 95 to 229; it reads GLSAAVGHTR…CHILVLASTS (135 aa). The active site involves Lys144. Substrate-binding positions include Arg176 and 212-213; that span reads SS. Ser212 (nucleophile) is an active-site residue. The interval 235 to 341 is RU C; the sequence is LHAVSRPMAD…SLCLVYETSI (107 aa). Glu273 contributes to the Mg(2+) binding site. Residues Arg300 and 319 to 320 contribute to the substrate site; that span reads SG. Positions 322, 325, 326, 327, and 330 each coordinate Mg(2+).

It belongs to the cyclic amide hydrolase (CyAH) family. In terms of assembly, homotetramer.

It carries out the reaction cyanurate + H2O = 1-carboxybiuret + H(+). The protein operates within xenobiotic degradation; atrazine degradation; biuret from cyanurate: step 1/1. With respect to regulation, inhibited by barbituric acid. Functionally, responsible for the hydrolysis of cyanuric acid, an intermediate formed during catabolism of s-triazine based compounds in herbicides such as atrazine and polymers such as melamine. Catalyzes the hydrolytic opening of the s-triazine ring of cyanuric acid (2,4,6-trihydroxy-s-triazine) to yield carbon dioxide and carboxybiuret, which spontaneously decarboxylates to biuret. Only active on cyanuric acid and N-methylisocyanuric acid. This chain is Cyanuric acid amidohydrolase, found in Sarocladium sp.